Reading from the N-terminus, the 94-residue chain is Integration host factor subunit beta (94 aa).

Belongs to the bacterial histone-like protein family. Heterodimer of an alpha and a beta chain.

Its function is as follows. This protein is one of the two subunits of integration host factor, a specific DNA-binding protein that functions in genetic recombination as well as in transcriptional and translational control. This Serratia proteamaculans (strain 568) protein is Integration host factor subunit beta.